Consider the following 276-residue polypeptide: Shikimate dehydrogenase (NADP(+)) (276 aa).

Shikimate is bound by residues 15–17 (SKS) and threonine 62. Lysine 66 acts as the Proton acceptor in catalysis. Asparagine 87 and aspartate 103 together coordinate shikimate. Residues 127-131 (GAGGA), 151-156 (NRTLSK), and methionine 215 each bind NADP(+). Tyrosine 217 contacts shikimate. Glycine 239 serves as a coordination point for NADP(+).

The protein belongs to the shikimate dehydrogenase family. Homodimer.

The catalysed reaction is shikimate + NADP(+) = 3-dehydroshikimate + NADPH + H(+). The protein operates within metabolic intermediate biosynthesis; chorismate biosynthesis; chorismate from D-erythrose 4-phosphate and phosphoenolpyruvate: step 4/7. In terms of biological role, involved in the biosynthesis of the chorismate, which leads to the biosynthesis of aromatic amino acids. Catalyzes the reversible NADPH linked reduction of 3-dehydroshikimate (DHSA) to yield shikimate (SA). The protein is Shikimate dehydrogenase (NADP(+)) of Cellvibrio japonicus (strain Ueda107) (Pseudomonas fluorescens subsp. cellulosa).